We begin with the raw amino-acid sequence, 291 residues long: MAENRYELNKNLAQMLKGGVIMDVQNPEQARIAEAAGAAAVMALERIPADIRAVGGVSRMSDPKMIKEIQGAVSIPVMAKVRIGHFVEAQILEAIEIDYIDESEVLSPADNRFHVDKKEFQVPFVCGAKDLGEALRRIAEGASMIRTKGEPGTGDIVQAVRHMRMMSQEIRRIQNLREDELYVAAKDLQVPVELVQYVHKHGKLPVVNFAAGGIATPADAALMMQLGAEGVFVGSGIFKSGDPIKRASAIVKAVTNYRNPQILAQISEDLGEAMVGINENEIQILMAERGK.

D23 is a binding site for D-ribose 5-phosphate. K80 acts as the Schiff-base intermediate with D-ribose 5-phosphate in catalysis. D-ribose 5-phosphate is bound at residue G152. R164 is a D-glyceraldehyde 3-phosphate binding site. Residues G213 and 234–235 each bind D-ribose 5-phosphate; that span reads GS.

This sequence belongs to the PdxS/SNZ family. As to quaternary structure, in the presence of PdxT, forms a dodecamer of heterodimers.

The catalysed reaction is aldehydo-D-ribose 5-phosphate + D-glyceraldehyde 3-phosphate + L-glutamine = pyridoxal 5'-phosphate + L-glutamate + phosphate + 3 H2O + H(+). It functions in the pathway cofactor biosynthesis; pyridoxal 5'-phosphate biosynthesis. Its function is as follows. Catalyzes the formation of pyridoxal 5'-phosphate from ribose 5-phosphate (RBP), glyceraldehyde 3-phosphate (G3P) and ammonia. The ammonia is provided by the PdxT subunit. Can also use ribulose 5-phosphate and dihydroxyacetone phosphate as substrates, resulting from enzyme-catalyzed isomerization of RBP and G3P, respectively. The protein is Pyridoxal 5'-phosphate synthase subunit PdxS of Haemophilus influenzae (strain ATCC 51907 / DSM 11121 / KW20 / Rd).